We begin with the raw amino-acid sequence, 89 residues long: Cell division topological specificity factor (89 aa).

This sequence belongs to the MinE family.

Its function is as follows. Prevents the cell division inhibition by proteins MinC and MinD at internal division sites while permitting inhibition at polar sites. This ensures cell division at the proper site by restricting the formation of a division septum at the midpoint of the long axis of the cell. In Klebsiella pneumoniae (strain 342), this protein is Cell division topological specificity factor.